A 336-amino-acid polypeptide reads, in one-letter code: Ketol-acid reductoisomerase (NADP(+)) 1 (336 aa).

The 180-residue stretch at 2-181 folds into the KARI N-terminal Rossmann domain; it reads AKVYYEKDVT…GATRAGVLET (180 aa). Residues 25–28, R48, S52, and 82–85 contribute to the NADP(+) site; these read YGSQ and DELQ. H107 is an active-site residue. Position 133 (G133) interacts with NADP(+). One can recognise a KARI C-terminal knotted domain in the interval 182–327; the sequence is TFKEETETDL…RKLREMMPFV (146 aa). Residues D190, E194, E226, and E230 each coordinate Mg(2+). S251 is a substrate binding site.

It belongs to the ketol-acid reductoisomerase family. The cofactor is Mg(2+).

It catalyses the reaction (2R)-2,3-dihydroxy-3-methylbutanoate + NADP(+) = (2S)-2-acetolactate + NADPH + H(+). It carries out the reaction (2R,3R)-2,3-dihydroxy-3-methylpentanoate + NADP(+) = (S)-2-ethyl-2-hydroxy-3-oxobutanoate + NADPH + H(+). The protein operates within amino-acid biosynthesis; L-isoleucine biosynthesis; L-isoleucine from 2-oxobutanoate: step 2/4. It participates in amino-acid biosynthesis; L-valine biosynthesis; L-valine from pyruvate: step 2/4. Its function is as follows. Involved in the biosynthesis of branched-chain amino acids (BCAA). Catalyzes an alkyl-migration followed by a ketol-acid reduction of (S)-2-acetolactate (S2AL) to yield (R)-2,3-dihydroxy-isovalerate. In the isomerase reaction, S2AL is rearranged via a Mg-dependent methyl migration to produce 3-hydroxy-3-methyl-2-ketobutyrate (HMKB). In the reductase reaction, this 2-ketoacid undergoes a metal-dependent reduction by NADPH to yield (R)-2,3-dihydroxy-isovalerate. The chain is Ketol-acid reductoisomerase (NADP(+)) 1 from Bacillus thuringiensis subsp. konkukian (strain 97-27).